Here is a 443-residue protein sequence, read N- to C-terminus: Flavastacin (443 aa).

Residues Met-1 to Ala-15 form the signal peptide. Positions Leu-16 to Arg-91 are cleaved as a propeptide — activation peptide. The 198-residue stretch at Ser-92–Val-289 folds into the Peptidase M12A domain. His-189 provides a ligand contact to Zn(2+). Residue Glu-190 is part of the active site. Zn(2+)-binding residues include His-193 and His-199. The 144-residue stretch at Gly-297 to Thr-440 folds into the Ricin B-type lectin domain. Ser-355 carries an O-linked (Man...) serine glycan.

Zn(2+) is required as a cofactor. Post-translationally, O-linked glycan consists of the Man, GlcNAc, GlcU, Glc, GlcU, Rha, Man heptasaccharide.

The catalysed reaction is Hydrolyzes polypeptides on the amino-side of Asp in -Xaa-|-Asp-. Acts very slowly on -Xaa-|-Glu.. In terms of biological role, zinc metallendopeptidase that cleaves preferentially on N-terminal side of aspartate-containing substrates. In Elizabethkingia meningoseptica (Chryseobacterium meningosepticum), this protein is Flavastacin.